The sequence spans 361 residues: MEYSCVDDSSTTSESLSISTTPKPTTTTEKKLSSPPATSMRLYRMGSGGSSVVLDSENGVETESRKLPSSKYKGVVPQPNGRWGAQIYEKHQRVWLGTFNEEEEAASSYDIAVRRFRGRDAVTNFKSQVDGNDAESAFLDAHSKAEIVDMLRKHTYADEFEQSRRKFVNGDGKRSGLETATYGNDAVLRAREVLFEKTVTPSDVGKLNRLVIPKQHAEKHFPLPAMTTAMGMNPSPTKGVLINLEDRTGKVWRFRYSYWNSSQSYVLTKGWSRFVKEKNLRAGDVVCFERSTGPDRQLYIHWKVRSSPVQTVVRLFGVNIFNVSNEKPNDVAVECVGKKRSREDDLFSLGCSKKQAIINIL.

The segment at Met-1 to Lys-73 is disordered. Positions Ser-9 to Thr-27 are enriched in low complexity. Positions Lys-71 to Lys-126 form a DNA-binding region, AP2/ERF. Positions Phe-195–Ser-306 form a DNA-binding region, TF-B3.

Belongs to the AP2/ERF transcription factor family. RAV subfamily. In terms of assembly, interacts with FT. In terms of tissue distribution, expressed in leaves.

Its subcellular location is the nucleus. In terms of biological role, transcriptional repressor of flowering time on long day plants. Acts directly on FT expression by binding 5'-CAACA-3' and 5'-CACCTG-3 sequences. Functionally redundant with TEM2. This is AP2/ERF and B3 domain-containing transcription repressor TEM1 (TEM1) from Arabidopsis thaliana (Mouse-ear cress).